A 103-amino-acid chain; its full sequence is Large ribosomal subunit protein uL24 (103 aa).

The protein belongs to the universal ribosomal protein uL24 family. In terms of assembly, part of the 50S ribosomal subunit.

In terms of biological role, one of two assembly initiator proteins, it binds directly to the 5'-end of the 23S rRNA, where it nucleates assembly of the 50S subunit. One of the proteins that surrounds the polypeptide exit tunnel on the outside of the subunit. The polypeptide is Large ribosomal subunit protein uL24 (Vesicomyosocius okutanii subsp. Calyptogena okutanii (strain HA)).